The primary structure comprises 621 residues: UvrABC system protein C (621 aa).

Residues 20 to 106 (TQSGIYQFFD…IKSLKPKYNI (87 aa)) form the GIY-YIG domain. The UVR domain maps to 212–247 (KALLKILESKMHTLSHNLQFEEAAIMRDRIQKITQM).

The protein belongs to the UvrC family. Interacts with UvrB in an incision complex.

It localises to the cytoplasm. In terms of biological role, the UvrABC repair system catalyzes the recognition and processing of DNA lesions. UvrC both incises the 5' and 3' sides of the lesion. The N-terminal half is responsible for the 3' incision and the C-terminal half is responsible for the 5' incision. The polypeptide is UvrABC system protein C (Helicobacter hepaticus (strain ATCC 51449 / 3B1)).